A 53-amino-acid chain; its full sequence is UPF0391 membrane protein ETA_06630 (53 aa).

The next 2 membrane-spanning stretches (helical) occupy residues 4–24 (WGII…GGLA) and 27–47 (AAWA…ISLF).

This sequence belongs to the UPF0391 family.

Its subcellular location is the cell membrane. This chain is UPF0391 membrane protein ETA_06630, found in Erwinia tasmaniensis (strain DSM 17950 / CFBP 7177 / CIP 109463 / NCPPB 4357 / Et1/99).